The following is a 179-amino-acid chain: Acireductone dioxygenase (179 aa).

The interval 1-21 is disordered; sequence MVQAWYMDDSTEDQRKPHHLQ. Residues His-88, His-90, Glu-94, and His-133 each contribute to the Fe(2+) site. Residues His-88, His-90, Glu-94, and His-133 each contribute to the Ni(2+) site.

It belongs to the acireductone dioxygenase (ARD) family. As to quaternary structure, monomer. Interacts with MMP14. It depends on Fe(2+) as a cofactor. Ni(2+) is required as a cofactor.

It is found in the cytoplasm. Its subcellular location is the nucleus. It localises to the cell membrane. The enzyme catalyses 1,2-dihydroxy-5-(methylsulfanyl)pent-1-en-3-one + O2 = 4-methylsulfanyl-2-oxobutanoate + formate + 2 H(+). The catalysed reaction is 1,2-dihydroxy-5-(methylsulfanyl)pent-1-en-3-one + O2 = 3-(methylsulfanyl)propanoate + CO + formate + 2 H(+). Its pathway is amino-acid biosynthesis; L-methionine biosynthesis via salvage pathway; L-methionine from S-methyl-5-thio-alpha-D-ribose 1-phosphate: step 5/6. Catalyzes 2 different reactions between oxygen and the acireductone 1,2-dihydroxy-3-keto-5-methylthiopentene (DHK-MTPene) depending upon the metal bound in the active site. Fe-containing acireductone dioxygenase (Fe-ARD) produces formate and 2-keto-4-methylthiobutyrate (KMTB), the alpha-ketoacid precursor of methionine in the methionine recycle pathway. Ni-containing acireductone dioxygenase (Ni-ARD) produces methylthiopropionate, carbon monoxide and formate, and does not lie on the methionine recycle pathway. This is Acireductone dioxygenase (adi1) from Xenopus tropicalis (Western clawed frog).